The primary structure comprises 385 residues: MYVRHLGLRDFRSWAHADLELGPGRTVFVGPNGFGKTNIIEALWYSATLGSHRVGTDAPLIRAGADRAVISTIVVNDGRECAVDLEIAAGRANKARLNRSPVRSTREVIGVLRAVLFAPEDLALVRGDPADRRRYLDDLATLRRPTIAGVRADYDKVLRQRTALLKSVSGARFRGDRGALDTLDVWDSRLAQHGAELMAARIDLVRLLAPEVEKAYQLLAPESRSAAIAYRASMDAFVAADDAAPDRVTLEEGLLAALAARRDAELERGVCLVGPHRDDLELRLGDQPAKGFASHGESWSMAVALRLAAFALLRADGSEPVLLLDDVFAELDAARRTALARVAESAEQVLVTAAVLEDIPSGWDARKVHIDLRDSADGRVSVVQS.

30–37 contacts ATP; that stretch reads GPNGFGKT.

This sequence belongs to the RecF family.

It localises to the cytoplasm. Its function is as follows. The RecF protein is involved in DNA metabolism; it is required for DNA replication and normal SOS inducibility. RecF binds preferentially to single-stranded, linear DNA. It also seems to bind ATP. The protein is DNA replication and repair protein RecF of Mycobacterium marinum (strain ATCC BAA-535 / M).